Consider the following 580-residue polypeptide: Glutamyl-tRNA(Gln) amidotransferase subunit B-2, chloroplastic/mitochondrial (580 aa).

Composition is skewed to low complexity over residues 20-35 (RRDA…ATVS) and 42-59 (AVST…SAAV). The segment at 20–64 (RRDATAAASTSAATVSRGRRARAVSTTTTTSSSSSSSAAVDARDA) is disordered.

The protein belongs to the GatB/GatE family. GatB subfamily. In terms of assembly, subunit of the heterotrimeric GatCAB amidotransferase (AdT) complex, composed of A, B and C subunits.

The protein localises to the mitochondrion. It localises to the plastid. It is found in the chloroplast. The enzyme catalyses L-glutamyl-tRNA(Gln) + L-glutamine + ATP + H2O = L-glutaminyl-tRNA(Gln) + L-glutamate + ADP + phosphate + H(+). Its function is as follows. Allows the formation of correctly charged Gln-tRNA(Gln) through the transamidation of misacylated Glu-tRNA(Gln) in chloroplasts and mitochondria. The reaction takes place in the presence of glutamine and ATP through an activated gamma-phospho-Glu-tRNA(Gln). The chain is Glutamyl-tRNA(Gln) amidotransferase subunit B-2, chloroplastic/mitochondrial from Micromonas pusilla (strain CCMP1545) (Picoplanktonic green alga).